We begin with the raw amino-acid sequence, 243 residues long: NifU-like scaffold protein (243 aa).

Belongs to the NifU family. Homodimer.

It is found in the plastid. Its subcellular location is the apicoplast. It participates in cofactor biosynthesis; iron-sulfur cluster biosynthesis. Functionally, binds and transfers [4Fe-4S] iron-sulfur clusters to target proteins. In Plasmodium berghei (strain Anka), this protein is NifU-like scaffold protein.